Consider the following 122-residue polypeptide: Large ribosomal subunit protein bL12 (122 aa).

Belongs to the bacterial ribosomal protein bL12 family. As to quaternary structure, homodimer. Part of the ribosomal stalk of the 50S ribosomal subunit. Forms a multimeric L10(L12)X complex, where L10 forms an elongated spine to which 2 to 4 L12 dimers bind in a sequential fashion. Binds GTP-bound translation factors.

Its function is as follows. Forms part of the ribosomal stalk which helps the ribosome interact with GTP-bound translation factors. Is thus essential for accurate translation. This Buchnera aphidicola subsp. Acyrthosiphon pisum (strain Tuc7) protein is Large ribosomal subunit protein bL12.